A 1040-amino-acid polypeptide reads, in one-letter code: Multidrug resistance protein MdtB (1040 aa).

Helical transmembrane passes span 25 to 45 (LLMAAMLLAGIIGYRFLPVAA), 347 to 367 (LMLAIALVVMIIYLFLRNIPA), 369 to 389 (IIPGVAVPLSLIGTFAVMVFL), 396 to 416 (LTLMALTIATGFVVDDAIVVI), 440 to 460 (IGFTIISLTFSLIAVLIPLLF), 472 to 492 (FAVTLAVAILISAVVSLTLTP), 537 to 557 (WLTLSVAFATLLLSVMLWIVI), 869 to 889 (LIVAAVVAMYIVLGVLYESFI), 890 to 910 (HPITILSTLPTAGVGALLALM), 911 to 931 (IAGSELDIIAIIGIILLIGIV), 968 to 988 (ILMTTLAALLGALPLMLSTGV), and 998 to 1018 (IAMVGGLLVSQILTLFTTPVI).

It belongs to the resistance-nodulation-cell division (RND) (TC 2.A.6) family. MdtB subfamily. In terms of assembly, part of a tripartite efflux system composed of MdtA, MdtB and MdtC. MdtB forms a heteromultimer with MdtC.

Its subcellular location is the cell inner membrane. This chain is Multidrug resistance protein MdtB, found in Salmonella arizonae (strain ATCC BAA-731 / CDC346-86 / RSK2980).